The chain runs to 333 residues: Ketol-acid reductoisomerase (NADP(+)) (333 aa).

In terms of domain architecture, KARI N-terminal Rossmann spans 1–179; that stretch reads MFYDDNADLS…GGTRAGVIKT (179 aa). NADP(+) is bound by residues 22 to 25, S48, S50, and 80 to 83; these read YGSQ and DTAQ. Residue H105 is part of the active site. An NADP(+)-binding site is contributed by G131. The KARI C-terminal knotted domain maps to 180-325; that stretch reads TFKDETETDL…KKLRDLMSWV (146 aa). Mg(2+) is bound by residues D188, E192, E224, and E228. S249 serves as a coordination point for substrate.

Belongs to the ketol-acid reductoisomerase family. Requires Mg(2+) as cofactor.

It carries out the reaction (2R)-2,3-dihydroxy-3-methylbutanoate + NADP(+) = (2S)-2-acetolactate + NADPH + H(+). It catalyses the reaction (2R,3R)-2,3-dihydroxy-3-methylpentanoate + NADP(+) = (S)-2-ethyl-2-hydroxy-3-oxobutanoate + NADPH + H(+). It participates in amino-acid biosynthesis; L-isoleucine biosynthesis; L-isoleucine from 2-oxobutanoate: step 2/4. The protein operates within amino-acid biosynthesis; L-valine biosynthesis; L-valine from pyruvate: step 2/4. Its function is as follows. Involved in the biosynthesis of branched-chain amino acids (BCAA). Catalyzes an alkyl-migration followed by a ketol-acid reduction of (S)-2-acetolactate (S2AL) to yield (R)-2,3-dihydroxy-isovalerate. In the isomerase reaction, S2AL is rearranged via a Mg-dependent methyl migration to produce 3-hydroxy-3-methyl-2-ketobutyrate (HMKB). In the reductase reaction, this 2-ketoacid undergoes a metal-dependent reduction by NADPH to yield (R)-2,3-dihydroxy-isovalerate. This is Ketol-acid reductoisomerase (NADP(+)) from Mycobacterium leprae (strain TN).